An 85-amino-acid chain; its full sequence is uncharacterized protein (85 aa).

This is an uncharacterized protein from Mycobacterium tuberculosis (strain CDC 1551 / Oshkosh).